Consider the following 178-residue polypeptide: ATP synthase subunit delta (178 aa).

It belongs to the ATPase delta chain family. In terms of assembly, F-type ATPases have 2 components, F(1) - the catalytic core - and F(0) - the membrane proton channel. F(1) has five subunits: alpha(3), beta(3), gamma(1), delta(1), epsilon(1). F(0) has three main subunits: a(1), b(2) and c(10-14). The alpha and beta chains form an alternating ring which encloses part of the gamma chain. F(1) is attached to F(0) by a central stalk formed by the gamma and epsilon chains, while a peripheral stalk is formed by the delta and b chains.

Its subcellular location is the cell membrane. Its function is as follows. F(1)F(0) ATP synthase produces ATP from ADP in the presence of a proton or sodium gradient. F-type ATPases consist of two structural domains, F(1) containing the extramembraneous catalytic core and F(0) containing the membrane proton channel, linked together by a central stalk and a peripheral stalk. During catalysis, ATP synthesis in the catalytic domain of F(1) is coupled via a rotary mechanism of the central stalk subunits to proton translocation. This protein is part of the stalk that links CF(0) to CF(1). It either transmits conformational changes from CF(0) to CF(1) or is implicated in proton conduction. The chain is ATP synthase subunit delta from Streptococcus equi subsp. zooepidemicus (strain MGCS10565).